The chain runs to 501 residues: Cytochrome P450 2J4 (501 aa).

2 consecutive transmembrane segments (helical) span residues 12-32 and 77-97; these read IWAA…LLLA and NIFS…LPLI. Heme is bound at residue C447.

The protein belongs to the cytochrome P450 family. Heme is required as a cofactor. As to expression, expressed in small intestinal enterocytes (at protein level). In the intestinal crypt, expressed at higher levels in the mature villous cells than in undifferentiated crypt cells (at protein level). Expressed in liver, kidney, lung, and olfactory mucosa (at protein level).

It is found in the endoplasmic reticulum membrane. The protein resides in the microsome membrane. The catalysed reaction is an organic molecule + reduced [NADPH--hemoprotein reductase] + O2 = an alcohol + oxidized [NADPH--hemoprotein reductase] + H2O + H(+). It carries out the reaction (5Z,8Z,11Z,14Z)-eicosatetraenoate + reduced [NADPH--hemoprotein reductase] + O2 = 19-hydroxy-(5Z,8Z,11Z,14Z)-eicosatetraenoate + oxidized [NADPH--hemoprotein reductase] + H2O + H(+). The enzyme catalyses all-trans-retinal + reduced [NADPH--hemoprotein reductase] + O2 = all-trans-retinoate + oxidized [NADPH--hemoprotein reductase] + H2O + 2 H(+). It catalyses the reaction 9-cis-retinal + reduced [NADPH--hemoprotein reductase] + O2 = 9-cis-retinoate + oxidized [NADPH--hemoprotein reductase] + H2O + 2 H(+). It functions in the pathway lipid metabolism; arachidonate metabolism. Its pathway is cofactor metabolism; retinol metabolism. In terms of biological role, a cytochrome P450 monooxygenase that may play a major role in intestinal retinoid metabolism. Catalyzes the oxidative transformation of all-trans retinal and 9-cis-retinal to the corresponding active forms all-trans and 9-cis retinoic acids. Catalyzes the hydroxylation of carbon-hydrogen bonds. Hydroxylates arachidonic acid predominantly at the omega-1 position. Mechanistically, uses molecular oxygen inserting one oxygen atom into a substrate, and reducing the second into a water molecule, with two electrons provided by NADPH via cytochrome P450 reductase (CPR; NADPH--hemoprotein reductase). This is Cytochrome P450 2J4 from Rattus norvegicus (Rat).